Here is a 349-residue protein sequence, read N- to C-terminus: Bifunctional protein FolKE (349 aa).

Positions 1–226 (MQTTYLSMGS…LFEIDSSKTD (226 aa)) are 2-amino-4-hydroxy-6-hydroxymethyldihydropteridine pyrophosphokinase. Residues 226–349 (DSIVLIKDIP…KRMEFLESLL (124 aa)) are GTP cyclohydrolase 1.

In the N-terminal section; belongs to the HPPK family. This sequence in the C-terminal section; belongs to the GTP cyclohydrolase I family. Homomer.

The enzyme catalyses 6-hydroxymethyl-7,8-dihydropterin + ATP = (7,8-dihydropterin-6-yl)methyl diphosphate + AMP + H(+). It carries out the reaction GTP + H2O = 7,8-dihydroneopterin 3'-triphosphate + formate + H(+). It participates in cofactor biosynthesis; 7,8-dihydroneopterin triphosphate biosynthesis; 7,8-dihydroneopterin triphosphate from GTP: step 1/1. The protein operates within cofactor biosynthesis; tetrahydrofolate biosynthesis; 2-amino-4-hydroxy-6-hydroxymethyl-7,8-dihydropteridine diphosphate from 7,8-dihydroneopterin triphosphate: step 4/4. The sequence is that of Bifunctional protein FolKE (folKE) from Lactococcus lactis subsp. lactis (strain IL1403) (Streptococcus lactis).